The chain runs to 338 residues: Ketol-acid reductoisomerase (NADP(+)) (338 aa).

The KARI N-terminal Rossmann domain maps to 1–181; it reads MRVFYDKDCD…GGGRTGIIET (181 aa). Residues 24-27, R47, S50, T52, and 82-85 contribute to the NADP(+) site; these read YGSQ and DEFQ. H107 is an active-site residue. G133 provides a ligand contact to NADP(+). One can recognise a KARI C-terminal knotted domain in the interval 182–327; that stretch reads TFKDETETDL…EKLRAMMPWI (146 aa). Mg(2+)-binding residues include D190, E194, E226, and E230. S251 contacts substrate.

It belongs to the ketol-acid reductoisomerase family. Mg(2+) serves as cofactor.

It catalyses the reaction (2R)-2,3-dihydroxy-3-methylbutanoate + NADP(+) = (2S)-2-acetolactate + NADPH + H(+). It carries out the reaction (2R,3R)-2,3-dihydroxy-3-methylpentanoate + NADP(+) = (S)-2-ethyl-2-hydroxy-3-oxobutanoate + NADPH + H(+). It participates in amino-acid biosynthesis; L-isoleucine biosynthesis; L-isoleucine from 2-oxobutanoate: step 2/4. It functions in the pathway amino-acid biosynthesis; L-valine biosynthesis; L-valine from pyruvate: step 2/4. Its function is as follows. Involved in the biosynthesis of branched-chain amino acids (BCAA). Catalyzes an alkyl-migration followed by a ketol-acid reduction of (S)-2-acetolactate (S2AL) to yield (R)-2,3-dihydroxy-isovalerate. In the isomerase reaction, S2AL is rearranged via a Mg-dependent methyl migration to produce 3-hydroxy-3-methyl-2-ketobutyrate (HMKB). In the reductase reaction, this 2-ketoacid undergoes a metal-dependent reduction by NADPH to yield (R)-2,3-dihydroxy-isovalerate. The chain is Ketol-acid reductoisomerase (NADP(+)) from Pseudomonas aeruginosa (strain LESB58).